Here is a 471-residue protein sequence, read N- to C-terminus: E3 SUMO-protein ligase EGR2 (471 aa).

A compositionally biased stretch (low complexity) spans proline 127 to proline 143. The segment at proline 127–alanine 177 is disordered. N6-acetyllysine; by EP300 is present on lysine 246. Disordered regions lie at residues glycine 273 to alanine 301 and arginine 313 to proline 336. Residues threonine 280 to glutamate 289 show a composition bias toward gly residues. C2H2-type zinc fingers lie at residues tyrosine 335 to histidine 359, phenylalanine 365 to histidine 387, and phenylalanine 393 to histidine 415. A disordered region spans residues aspartate 406–proline 471. Over residues arginine 410–glutamate 420 the composition is skewed to basic residues. The span at serine 424–serine 437 shows a compositional bias: low complexity.

Belongs to the EGR C2H2-type zinc-finger protein family. Interacts with HCFC1. Interacts with WWP2. Interacts with UBC9. Interacts with CITED1. Interacts (via phosphorylated form) with SFN. Post-translationally, ubiquitinated by WWP2 leading to proteasomal degradation. Acetylated at Lys-246. May be deacetylated by HDAC6, HDAC10 or SIRT1.

The protein resides in the nucleus. The protein operates within protein modification; protein sumoylation. Functionally, sequence-specific DNA-binding transcription factor. Plays a role in hindbrain segmentation by regulating the expression of a subset of homeobox containing genes and in Schwann cell myelination by regulating the expression of genes involved in the formation and maintenance of myelin. Binds to two EGR2-consensus sites EGR2A (5'-CTGTAGGAG-3') and EGR2B (5'-ATGTAGGTG-3') in the HOXB3 enhancer and promotes HOXB3 transcriptional activation. Binds to specific DNA sites located in the promoter region of HOXA4, HOXB2 and ERBB2. Regulates hindbrain segmentation by controlling the expression of Hox genes, such as HOXA4, HOXB3 and HOXB2, and thereby specifying odd and even rhombomeres. Promotes the expression of HOXB3 in the rhombomere r5 in the hindbrain. Regulates myelination in the peripheral nervous system after birth, possibly by regulating the expression of myelin proteins, such as MPZ, and by promoting the differentiation of Schwann cells. Involved in the development of the jaw openener musculature, probably by playing a role in its innervation through trigeminal motor neurons. May play a role in adipogenesis, possibly by regulating the expression of CEBPB. Its function is as follows. E3 SUMO-protein ligase helping SUMO1 conjugation to its coregulators NAB1 and NAB2, whose sumoylation down-regulates EGR2 transcriptional activity. The sequence is that of E3 SUMO-protein ligase EGR2 (EGR2) from Sus scrofa (Pig).